A 342-amino-acid chain; its full sequence is Phosphoribosylformylglycinamidine cyclo-ligase (342 aa).

The protein belongs to the AIR synthase family.

The protein resides in the cytoplasm. It carries out the reaction 2-formamido-N(1)-(5-O-phospho-beta-D-ribosyl)acetamidine + ATP = 5-amino-1-(5-phospho-beta-D-ribosyl)imidazole + ADP + phosphate + H(+). The protein operates within purine metabolism; IMP biosynthesis via de novo pathway; 5-amino-1-(5-phospho-D-ribosyl)imidazole from N(2)-formyl-N(1)-(5-phospho-D-ribosyl)glycinamide: step 2/2. This Staphylococcus aureus (strain MSSA476) protein is Phosphoribosylformylglycinamidine cyclo-ligase.